We begin with the raw amino-acid sequence, 94 residues long: uncharacterized protein (94 aa).

Positions 1–25 (MRAAIAVLFIALVGLATYHLVMSQA) are cleaved as a signal peptide.

This is an uncharacterized protein from Archaeoglobus fulgidus (strain ATCC 49558 / DSM 4304 / JCM 9628 / NBRC 100126 / VC-16).